Consider the following 181-residue polypeptide: Transcription termination/antitermination protein NusG (181 aa).

A KOW domain is found at Pro-130 to Ser-161.

This sequence belongs to the NusG family. Monomer. Interacts with the transcription termination factor Rho and with RNA polymerase.

In terms of biological role, participates in transcription elongation, termination and antitermination. In the absence of Rho, increases the rate of transcription elongation by the RNA polymerase (RNAP), probably by partially suppressing pausing. In the presence of Rho, modulates most Rho-dependent termination events by interacting with the RNAP to render the complex more susceptible to the termination activity of Rho. May be required to overcome a kinetic limitation of Rho to function at certain terminators. Also involved in ribosomal RNA transcriptional antitermination. The sequence is that of Transcription termination/antitermination protein NusG from Salmonella typhi.